We begin with the raw amino-acid sequence, 122 residues long: Large ribosomal subunit protein uL18 (122 aa).

Belongs to the universal ribosomal protein uL18 family. In terms of assembly, part of the 50S ribosomal subunit; part of the 5S rRNA/L5/L18/L25 subcomplex. Contacts the 5S and 23S rRNAs.

Its function is as follows. This is one of the proteins that bind and probably mediate the attachment of the 5S RNA into the large ribosomal subunit, where it forms part of the central protuberance. The sequence is that of Large ribosomal subunit protein uL18 from Dictyoglomus thermophilum (strain ATCC 35947 / DSM 3960 / H-6-12).